A 164-amino-acid chain; its full sequence is Putative 4-hydroxy-4-methyl-2-oxoglutarate aldolase (164 aa).

Residues 74-77 (GGNL) and R96 each bind substrate. Position 97 (D97) interacts with a divalent metal cation.

It belongs to the class II aldolase/RraA-like family. As to quaternary structure, homotrimer. It depends on a divalent metal cation as a cofactor.

It catalyses the reaction 4-hydroxy-4-methyl-2-oxoglutarate = 2 pyruvate. The catalysed reaction is oxaloacetate + H(+) = pyruvate + CO2. Functionally, catalyzes the aldol cleavage of 4-hydroxy-4-methyl-2-oxoglutarate (HMG) into 2 molecules of pyruvate. Also contains a secondary oxaloacetate (OAA) decarboxylase activity due to the common pyruvate enolate transition state formed following C-C bond cleavage in the retro-aldol and decarboxylation reactions. In Thermus thermophilus (strain ATCC BAA-163 / DSM 7039 / HB27), this protein is Putative 4-hydroxy-4-methyl-2-oxoglutarate aldolase.